Consider the following 81-residue polypeptide: Photosystem I iron-sulfur center (81 aa).

2 4Fe-4S ferredoxin-type domains span residues M1–W31 and I39–Y68. The [4Fe-4S] cluster site is built by C11, C14, C17, C21, C48, C51, C54, and C58.

In terms of assembly, the cyanobacterial PSI reaction center is composed of one copy each of PsaA,B,C,D,E,F,I,J,K,L,M and X, and forms trimeric complexes. The cofactor is [4Fe-4S] cluster.

The protein resides in the cellular thylakoid membrane. It carries out the reaction reduced [plastocyanin] + hnu + oxidized [2Fe-2S]-[ferredoxin] = oxidized [plastocyanin] + reduced [2Fe-2S]-[ferredoxin]. Functionally, apoprotein for the two 4Fe-4S centers FA and FB of photosystem I (PSI); essential for photochemical activity. FB is the terminal electron acceptor of PSI, donating electrons to ferredoxin. The C-terminus interacts with PsaA/B/D and helps assemble the protein into the PSI complex. Required for binding of PsaD and PsaE to PSI. PSI is a plastocyanin/cytochrome c6-ferredoxin oxidoreductase, converting photonic excitation into a charge separation, which transfers an electron from the donor P700 chlorophyll pair to the spectroscopically characterized acceptors A0, A1, FX, FA and FB in turn. The protein is Photosystem I iron-sulfur center of Rippkaea orientalis (strain PCC 8801 / RF-1) (Cyanothece sp. (strain PCC 8801)).